Consider the following 175-residue polypeptide: CDP-archaeol synthase (175 aa).

The next 4 membrane-spanning stretches (helical) occupy residues G41–F61, L82–F102, F122–F142, and V150–V170.

This sequence belongs to the CDP-archaeol synthase family. Mg(2+) serves as cofactor.

The protein resides in the cell membrane. The catalysed reaction is 2,3-bis-O-(geranylgeranyl)-sn-glycerol 1-phosphate + CTP + H(+) = CDP-2,3-bis-O-(geranylgeranyl)-sn-glycerol + diphosphate. It functions in the pathway membrane lipid metabolism; glycerophospholipid metabolism. In terms of biological role, catalyzes the formation of CDP-2,3-bis-(O-geranylgeranyl)-sn-glycerol (CDP-archaeol) from 2,3-bis-(O-geranylgeranyl)-sn-glycerol 1-phosphate (DGGGP) and CTP. This reaction is the third ether-bond-formation step in the biosynthesis of archaeal membrane lipids. The polypeptide is CDP-archaeol synthase (Methanosarcina mazei (strain ATCC BAA-159 / DSM 3647 / Goe1 / Go1 / JCM 11833 / OCM 88) (Methanosarcina frisia)).